Reading from the N-terminus, the 1011-residue chain is Multiple C2 domain and transmembrane region protein 7 (1011 aa).

Residues 1–110 (MMMSNLKLGV…PHSDAVVLHF (110 aa)) form the C2 1 domain. Residues 178 to 195 (QEHQHQHPQGPNQSSSLA) are compositionally biased toward polar residues. The segment at 178 to 201 (QEHQHQHPQGPNQSSSLAAEQDNH) is disordered. C2 domains lie at 261 to 381 (IHKD…PQWY), 421 to 546 (VDCS…ARWY), and 587 to 709 (YSSD…THSY). Residues Asp-294, Asp-300, Asp-347, Asp-349, and Asp-354 each coordinate Ca(2+). A run of 3 helical transmembrane segments spans residues 812 to 832 (MMTV…ICSW), 846 to 866 (LMLV…MFLI), and 954 to 974 (IFVI…IQIV).

It belongs to the MCTP family. The cofactor is Ca(2+). Accumulates specifically in hydathodes. Restricted the basal meristem of roots. Observed in flowers.

Its subcellular location is the membrane. The protein localises to the vesicle. The protein resides in the endosome membrane. Functionally, may function as a signaling molecule by regulating the trafficking of other regulators. The sequence is that of Multiple C2 domain and transmembrane region protein 7 from Arabidopsis thaliana (Mouse-ear cress).